A 743-amino-acid chain; its full sequence is Conserved oligomeric Golgi complex subunit 8 (743 aa).

Disordered regions lie at residues Glu-549–Glu-672 and Thr-704–Asp-743. Composition is skewed to basic and acidic residues over residues Glu-563–Asp-581, Pro-594–Pro-621, Ser-633–Leu-647, and Gln-654–Val-664. Acidic residues predominate over residues Thr-704–Glu-726. A compositionally biased stretch (basic and acidic residues) spans Ile-727–Asp-743.

This sequence belongs to the COG8 family. As to quaternary structure, component of the conserved oligomeric Golgi complex which is composed of eight different subunits and is required for normal Golgi morphology and localization.

It localises to the golgi apparatus membrane. In terms of biological role, required for normal Golgi function. This Caenorhabditis elegans protein is Conserved oligomeric Golgi complex subunit 8 (cogc-8).